We begin with the raw amino-acid sequence, 463 residues long: Asparagine--tRNA ligase (463 aa).

The protein belongs to the class-II aminoacyl-tRNA synthetase family. As to quaternary structure, homodimer.

Its subcellular location is the cytoplasm. It carries out the reaction tRNA(Asn) + L-asparagine + ATP = L-asparaginyl-tRNA(Asn) + AMP + diphosphate + H(+). In Nostoc sp. (strain PCC 7120 / SAG 25.82 / UTEX 2576), this protein is Asparagine--tRNA ligase.